Reading from the N-terminus, the 371-residue chain is DNA replication and repair protein RecF (371 aa).

An ATP-binding site is contributed by 30–37 (GENAQGKT).

This sequence belongs to the RecF family.

The protein localises to the cytoplasm. The RecF protein is involved in DNA metabolism; it is required for DNA replication and normal SOS inducibility. RecF binds preferentially to single-stranded, linear DNA. It also seems to bind ATP. In Staphylococcus haemolyticus (strain JCSC1435), this protein is DNA replication and repair protein RecF.